A 316-amino-acid polypeptide reads, in one-letter code: Fe-S cluster assembly protein dre2 (316 aa).

An N-terminal SAM-like domain region spans residues 1-128 (MAPRCLLIGT…KPEQEEPVSI (128 aa)). Positions 129-208 (PLKFGKNKAN…EDDLITEADM (80 aa)) are linker. Positions 141-177 (SATNGTNGAVNPDGSVPLNLNRKRDQPEPVKPAGVGF) are disordered. [2Fe-2S] cluster is bound by residues C218, C229, C232, and C234. The segment at 218–234 (CQPKPGKRRRACKDCTC) is fe-S binding site A. Positions 279, 282, 290, and 293 each coordinate [4Fe-4S] cluster. Short sequence motifs (cx2C motif) lie at residues 279 to 282 (CGNC) and 290 to 293 (CDGC). Positions 279–293 (CGNCALGDAFRCDGC) are fe-S binding site B.

This sequence belongs to the anamorsin family. Monomer. Interacts with TAH18. Interacts with MIA40. The cofactor is [2Fe-2S] cluster. [4Fe-4S] cluster serves as cofactor.

Its subcellular location is the cytoplasm. It is found in the mitochondrion intermembrane space. Component of the cytosolic iron-sulfur (Fe-S) protein assembly (CIA) machinery required for the maturation of extramitochondrial Fe-S proteins. Part of an electron transfer chain functioning in an early step of cytosolic Fe-S biogenesis, facilitating the de novo assembly of a [4Fe-4S] cluster on the scaffold complex CFD1-NBP35. Electrons are transferred to DRE2 from NADPH via the FAD- and FMN-containing protein TAH18. TAH18-DRE2 are also required for the assembly of the diferric tyrosyl radical cofactor of ribonucleotide reductase (RNR), probably by providing electrons for reduction during radical cofactor maturation in the catalytic small subunit RNR2. The sequence is that of Fe-S cluster assembly protein dre2 from Pyrenophora tritici-repentis (strain Pt-1C-BFP) (Wheat tan spot fungus).